We begin with the raw amino-acid sequence, 161 residues long: NADH-quinone oxidoreductase subunit I (161 aa).

2 consecutive 4Fe-4S ferredoxin-type domains span residues 52–82 (LRRY…IEAK) and 92–121 (TKYD…EGPN). Residues Cys62, Cys65, Cys68, Cys72, Cys101, Cys104, Cys107, and Cys111 each coordinate [4Fe-4S] cluster.

This sequence belongs to the complex I 23 kDa subunit family. As to quaternary structure, NDH-1 is composed of 14 different subunits. Subunits NuoA, H, J, K, L, M, N constitute the membrane sector of the complex. The cofactor is [4Fe-4S] cluster.

Its subcellular location is the cell inner membrane. The enzyme catalyses a quinone + NADH + 5 H(+)(in) = a quinol + NAD(+) + 4 H(+)(out). Its function is as follows. NDH-1 shuttles electrons from NADH, via FMN and iron-sulfur (Fe-S) centers, to quinones in the respiratory chain. The immediate electron acceptor for the enzyme in this species is believed to be ubiquinone. Couples the redox reaction to proton translocation (for every two electrons transferred, four hydrogen ions are translocated across the cytoplasmic membrane), and thus conserves the redox energy in a proton gradient. The protein is NADH-quinone oxidoreductase subunit I of Orientia tsutsugamushi (strain Boryong) (Rickettsia tsutsugamushi).